We begin with the raw amino-acid sequence, 91 residues long: UPF0386 protein CC_0226 (91 aa).

Belongs to the UPF0386 family.

The sequence is that of UPF0386 protein CC_0226 from Caulobacter vibrioides (strain ATCC 19089 / CIP 103742 / CB 15) (Caulobacter crescentus).